We begin with the raw amino-acid sequence, 260 residues long: Snake venom serine protease Dav-X (260 aa).

The signal sequence occupies residues 1 to 18 (MVLIRVLANLLILQLSYA). A propeptide spanning residues 19-24 (QKSSEL) is cleaved from the precursor. Residues 25-251 (VIGGVECDIN…YTDWIQNIIA (227 aa)) form the Peptidase S1 domain. 6 cysteine pairs are disulfide-bonded: C31–C165, C52–C68, C102–C258, C144–C212, C176–C191, and C202–C227. H67 acts as the Charge relay system in catalysis. N81 carries N-linked (GlcNAc...) asparagine glycosylation. D112 functions as the Charge relay system in the catalytic mechanism. N124 and N172 each carry an N-linked (GlcNAc...) asparagine glycan. The active-site Charge relay system is the S206. N241 carries N-linked (GlcNAc...) asparagine glycosylation.

The protein belongs to the peptidase S1 family. Snake venom subfamily. Monomer. In terms of tissue distribution, expressed by the venom gland.

The protein localises to the secreted. In terms of biological role, snake venom serine protease that may act in the hemostasis system of the prey. The chain is Snake venom serine protease Dav-X from Deinagkistrodon acutus (Hundred-pace snake).